Reading from the N-terminus, the 371-residue chain is S-adenosylmethionine:tRNA ribosyltransferase-isomerase (371 aa).

This sequence belongs to the QueA family. In terms of assembly, monomer.

It localises to the cytoplasm. The enzyme catalyses 7-aminomethyl-7-carbaguanosine(34) in tRNA + S-adenosyl-L-methionine = epoxyqueuosine(34) in tRNA + adenine + L-methionine + 2 H(+). It participates in tRNA modification; tRNA-queuosine biosynthesis. Transfers and isomerizes the ribose moiety from AdoMet to the 7-aminomethyl group of 7-deazaguanine (preQ1-tRNA) to give epoxyqueuosine (oQ-tRNA). The sequence is that of S-adenosylmethionine:tRNA ribosyltransferase-isomerase from Prochlorococcus marinus (strain MIT 9313).